We begin with the raw amino-acid sequence, 591 residues long: Adenine deaminase (591 aa).

It belongs to the metallo-dependent hydrolases superfamily. Adenine deaminase family. Homodimer. Requires Mn(2+) as cofactor.

It carries out the reaction adenine + H2O + H(+) = hypoxanthine + NH4(+). The protein is Adenine deaminase of Edwardsiella ictaluri (strain 93-146).